The sequence spans 689 residues: Glycine--tRNA ligase beta subunit (689 aa).

The protein belongs to the class-II aminoacyl-tRNA synthetase family. In terms of assembly, tetramer of two alpha and two beta subunits.

The protein localises to the cytoplasm. It carries out the reaction tRNA(Gly) + glycine + ATP = glycyl-tRNA(Gly) + AMP + diphosphate. The polypeptide is Glycine--tRNA ligase beta subunit (Shewanella halifaxensis (strain HAW-EB4)).